The sequence spans 269 residues: Tryptophan synthase alpha chain (269 aa).

Catalysis depends on proton acceptor residues glutamate 49 and aspartate 60.

This sequence belongs to the TrpA family. Tetramer of two alpha and two beta chains.

It catalyses the reaction (1S,2R)-1-C-(indol-3-yl)glycerol 3-phosphate + L-serine = D-glyceraldehyde 3-phosphate + L-tryptophan + H2O. It participates in amino-acid biosynthesis; L-tryptophan biosynthesis; L-tryptophan from chorismate: step 5/5. In terms of biological role, the alpha subunit is responsible for the aldol cleavage of indoleglycerol phosphate to indole and glyceraldehyde 3-phosphate. The polypeptide is Tryptophan synthase alpha chain (Pseudomonas putida (strain W619)).